The primary structure comprises 440 residues: Thymidine phosphorylase (440 aa).

This sequence belongs to the thymidine/pyrimidine-nucleoside phosphorylase family. Homodimer.

It catalyses the reaction thymidine + phosphate = 2-deoxy-alpha-D-ribose 1-phosphate + thymine. The protein operates within pyrimidine metabolism; dTMP biosynthesis via salvage pathway; dTMP from thymine: step 1/2. The enzymes which catalyze the reversible phosphorolysis of pyrimidine nucleosides are involved in the degradation of these compounds and in their utilization as carbon and energy sources, or in the rescue of pyrimidine bases for nucleotide synthesis. This chain is Thymidine phosphorylase, found in Escherichia coli (strain 55989 / EAEC).